Consider the following 88-residue polypeptide: Putative membrane protein insertion efficiency factor (88 aa).

It belongs to the UPF0161 family.

The protein resides in the cell membrane. In terms of biological role, could be involved in insertion of integral membrane proteins into the membrane. The sequence is that of Putative membrane protein insertion efficiency factor (yrcB) from Lactococcus lactis subsp. lactis (strain IL1403) (Streptococcus lactis).